Reading from the N-terminus, the 246-residue chain is MILFPAIDLKGGRCVRLVQGDMAQATVFGDDPAAQAERFERQGFSYLHMVDLDGAFAGKPQNAAAVEAVLARVKIPVQLGGGVRNLATVEAWLEKGVSRIIIGTAALRDPEFTRKAARLHPGKIAVGIDARDGRVAVEGWAETSDITAEELGRRFEDAGVAAIIYTDISRDGLLTGLNIEGTLALAGALKIPVIASGGLASLADVERLLQPDCAKLEGAITGRALYDGRLDPAAALELIARAKTAA.

The active-site Proton acceptor is the Asp-8. The Proton donor role is filled by Asp-129.

It belongs to the HisA/HisF family.

The protein resides in the cytoplasm. It catalyses the reaction 1-(5-phospho-beta-D-ribosyl)-5-[(5-phospho-beta-D-ribosylamino)methylideneamino]imidazole-4-carboxamide = 5-[(5-phospho-1-deoxy-D-ribulos-1-ylimino)methylamino]-1-(5-phospho-beta-D-ribosyl)imidazole-4-carboxamide. Its pathway is amino-acid biosynthesis; L-histidine biosynthesis; L-histidine from 5-phospho-alpha-D-ribose 1-diphosphate: step 4/9. This chain is 1-(5-phosphoribosyl)-5-[(5-phosphoribosylamino)methylideneamino] imidazole-4-carboxamide isomerase, found in Methylocella silvestris (strain DSM 15510 / CIP 108128 / LMG 27833 / NCIMB 13906 / BL2).